The chain runs to 129 residues: Large ribosomal subunit protein bL17 (129 aa).

Belongs to the bacterial ribosomal protein bL17 family. Part of the 50S ribosomal subunit. Contacts protein L32.

In Desulfotalea psychrophila (strain LSv54 / DSM 12343), this protein is Large ribosomal subunit protein bL17.